The chain runs to 349 residues: 4-hydroxythreonine-4-phosphate dehydrogenase (349 aa).

Residues H141 and T142 each coordinate substrate. A divalent metal cation-binding residues include H176, H221, and H276. Substrate-binding residues include K284, N293, and R302.

It belongs to the PdxA family. Homodimer. It depends on Zn(2+) as a cofactor. The cofactor is Mg(2+). Requires Co(2+) as cofactor.

The protein localises to the cytoplasm. It carries out the reaction 4-(phosphooxy)-L-threonine + NAD(+) = 3-amino-2-oxopropyl phosphate + CO2 + NADH. The protein operates within cofactor biosynthesis; pyridoxine 5'-phosphate biosynthesis; pyridoxine 5'-phosphate from D-erythrose 4-phosphate: step 4/5. Catalyzes the NAD(P)-dependent oxidation of 4-(phosphooxy)-L-threonine (HTP) into 2-amino-3-oxo-4-(phosphooxy)butyric acid which spontaneously decarboxylates to form 3-amino-2-oxopropyl phosphate (AHAP). In Methylorubrum extorquens (strain CM4 / NCIMB 13688) (Methylobacterium extorquens), this protein is 4-hydroxythreonine-4-phosphate dehydrogenase.